The sequence spans 332 residues: Fructose-1,6-bisphosphatase class 1 (332 aa).

The Mg(2+) site is built by E89, D110, L112, and D113. Substrate is bound by residues 113–116, N206, Y239, 257–259, and K269; these read DGSS and YLY. E275 provides a ligand contact to Mg(2+).

Belongs to the FBPase class 1 family. Homotetramer. Requires Mg(2+) as cofactor.

It is found in the cytoplasm. The enzyme catalyses beta-D-fructose 1,6-bisphosphate + H2O = beta-D-fructose 6-phosphate + phosphate. The protein operates within carbohydrate biosynthesis; gluconeogenesis. The polypeptide is Fructose-1,6-bisphosphatase class 1 (Salmonella arizonae (strain ATCC BAA-731 / CDC346-86 / RSK2980)).